A 419-amino-acid chain; its full sequence is D-amino acid dehydrogenase (419 aa).

3 to 17 (VLILGSGVVGVTSAY) provides a ligand contact to FAD.

The protein belongs to the DadA oxidoreductase family. FAD is required as a cofactor.

It catalyses the reaction a D-alpha-amino acid + A + H2O = a 2-oxocarboxylate + AH2 + NH4(+). Its pathway is amino-acid degradation; D-alanine degradation; NH(3) and pyruvate from D-alanine: step 1/1. Its function is as follows. Oxidative deamination of D-amino acids. The protein is D-amino acid dehydrogenase of Chromohalobacter salexigens (strain ATCC BAA-138 / DSM 3043 / CIP 106854 / NCIMB 13768 / 1H11).